The chain runs to 632 residues: MEMWVLGEVGMAVLSAAAMADWVSYYRGDGPDEEEDGEQQEEEGPEAVADYRFSGRDSLIFLVDASKAMFEPYENEEAATPFDMTMQCIRNVYTSKIISSDKDLLSVVFYGMENNKNSADFKHIYVLQELDNPGAKRILELDQYRGDEGRVLFRETFGHNADYSLGEALWACSNLFSDVRVRLSHKRIMLFTNEDNPHANDSAKAKLARTRAGDLRDTGIILDLMHLKKPGGFDISLFYRDIINVAEDEDLGIQPDESGKLEHLMKKVRAKETRKRALSRLNLYLNKDLSFSVGVYNLIQKAYKPYPVKLYRETNEPVKTKTRVFNGKTGSLLLPSDTKRAQTYGNRQIAMEKEETEEVKRFDSPGLFLIGFKPLSMLKQHHHIRPSQFMYPEESLVTGSTTLFNALLMKCLEKEVMALCRYIARRNTPPRIVALIPQEEEVDEQKVQIAPPGFHIIFLPYADDKRNVDFTEKVPANREQVDKMKGIIQKLRFKYRTDSFENPVLQQHFRNLEALALDMLEPEQAEDLTMPKTEEMSRRLGNLVEEFKQLVYPPDYSPEGKAAKRKQAGDAQAEKRPKIEISEDSLRSYVQNGTLGKLTVSALKDTCRHYGLRSGGKKQELIDALTEYFSGR.

The active-site Schiff-base intermediate with DNA; for 5'-deoxyribose-5-phosphate lyase activity is Arg-52. The Ku domain occupies 283 to 490 (LYLNKDLSFS…VDKMKGIIQK (208 aa)). Positions 555–578 (DYSPEGKAAKRKQAGDAQAEKRPK) are disordered. The region spanning 595–629 (LGKLTVSALKDTCRHYGLRSGGKKQELIDALTEYF) is the SAP domain.

This sequence belongs to the ku70 family. In terms of assembly, heterodimer composed of XRCC5/Ku80 and XRCC6/Ku70. Component of the core long-range non-homologous end joining (NHEJ) complex (also named DNA-PK complex) composed of PRKDC, LIG4, XRCC4, XRCC6/Ku70, XRCC5/Ku86 and NHEJ1/XLF. Additional component of the NHEJ complex includes PAXX. Following autophosphorylation, PRKDC dissociates from DNA, leading to formation of the short-range NHEJ complex, composed of LIG4, XRCC4, XRCC6/Ku70, XRCC5/Ku86 and NHEJ1/XLF. Phosphorylated on serine residues.

It is found in the nucleus. It localises to the chromosome. In terms of biological role, single-stranded DNA-dependent ATP-dependent helicase that plays a key role in DNA non-homologous end joining (NHEJ) by recruiting DNA-PK to DNA. Required for double-strand break repair and V(D)J recombination. Also has a role in chromosome translocation. Has a role in chromosome translocation. The DNA helicase II complex binds preferentially to fork-like ends of double-stranded DNA in a cell cycle-dependent manner. It works in the 3'-5' direction. During NHEJ, the XRCC5-XRRC6 dimer performs the recognition step: it recognizes and binds to the broken ends of the DNA and protects them from further resection. Binding to DNA may be mediated by XRCC6. The XRCC5-XRRC6 dimer acts as a regulatory subunit of the DNA-dependent protein kinase complex DNA-PK by increasing the affinity of the catalytic subunit PRKDC to DNA by 100-fold. The XRCC5-XRRC6 dimer is probably involved in stabilizing broken DNA ends and bringing them together. The assembly of the DNA-PK complex to DNA ends is required for the NHEJ ligation step. Probably also acts as a 5'-deoxyribose-5-phosphate lyase (5'-dRP lyase), by catalyzing the beta-elimination of the 5' deoxyribose-5-phosphate at an abasic site near double-strand breaks. 5'-dRP lyase activity allows to 'clean' the termini of abasic sites, a class of nucleotide damage commonly associated with strand breaks, before such broken ends can be joined. The XRCC5-XRRC6 dimer together with APEX1 acts as a negative regulator of transcription. This Gallus gallus (Chicken) protein is X-ray repair cross-complementing protein 5 (XRCC6).